The sequence spans 1087 residues: Exoglucanase XynX (1087 aa).

Positions 1–30 (MKNNLSKFVSIFTAFIMIFGTSLFFPHVSA) are cleaved as a signal peptide. The CBM-cenC domain occupies 37 to 188 (ANLVSNGDFE…YIDDVVVTPQ (152 aa)). The GH10 domain maps to 204–527 (QNDIPDLSSV…KPAYWAIADP (324 aa)). Glu347 functions as the Proton donor in the catalytic mechanism. The active site involves Asp389. The active-site Nucleophile is the Glu452. SLH domains follow at residues 903–966 (KKSV…YNGE), 967–1025 (FSDV…KEEN), and 1028–1087 (ATSF…SNNL).

Belongs to the glycosyl hydrolase 10 (cellulase F) family.

It catalyses the reaction Hydrolysis of (1-&gt;4)-beta-D-glucosidic linkages in cellulose and cellotetraose, releasing cellobiose from the non-reducing ends of the chains.. This is Exoglucanase XynX (xynX) from Acetivibrio thermocellus (Hungateiclostridium thermocellum).